The sequence spans 102 residues: Complement inhibitor RaCI6 (102 aa).

A signal peptide spans 1 to 24 (MAALNGLVLLLLTISAMFISECYS). Intrachain disulfides connect C37–C61 and C42–C63.

Belongs to the RaCI family. In terms of tissue distribution, expressed in salivary glands.

Its subcellular location is the secreted. In terms of biological role, complement inhibitor. Prevents complement-mediated C5 activation by binding to C5. Binds C5 at a different binding site than the other tick complement inhibitors OmCI and CirpT1, and the drug eculizumab. In Dermacentor andersoni (Rocky mountain wood tick), this protein is Complement inhibitor RaCI6.